Reading from the N-terminus, the 239-residue chain is tRNA (guanine-N(7)-)-methyltransferase (239 aa).

Residues Glu-69, Glu-94, Asp-121, and Asp-144 each contribute to the S-adenosyl-L-methionine site. Residue Asp-144 is part of the active site. Lys-148 contributes to the substrate binding site. The interaction with RNA stretch occupies residues Arg-150–Arg-155. Substrate contacts are provided by residues Asp-180 and Thr-217–Glu-220.

This sequence belongs to the class I-like SAM-binding methyltransferase superfamily. TrmB family. Monomer.

The catalysed reaction is guanosine(46) in tRNA + S-adenosyl-L-methionine = N(7)-methylguanosine(46) in tRNA + S-adenosyl-L-homocysteine. The protein operates within tRNA modification; N(7)-methylguanine-tRNA biosynthesis. Catalyzes the formation of N(7)-methylguanine at position 46 (m7G46) in tRNA. This Yersinia pseudotuberculosis serotype I (strain IP32953) protein is tRNA (guanine-N(7)-)-methyltransferase.